Reading from the N-terminus, the 221-residue chain is UPF0758 protein NTHI1125 (221 aa).

The 124-residue stretch at 98–221 (PIINDLETVK…CYSFAENCLL (124 aa)) folds into the MPN domain. Positions 170, 172, and 183 each coordinate Zn(2+). The short motif at 170-183 (HNHPSGITEPSYSD) is the JAMM motif element.

It belongs to the UPF0758 family.

This is UPF0758 protein NTHI1125 from Haemophilus influenzae (strain 86-028NP).